The chain runs to 325 residues: Peroxidase 45 (325 aa).

Positions 1–25 are cleaved as a signal peptide; the sequence is MEKNTSQTIFSNFFLLLLLSSCVSA. 4 disulfides stabilise this stretch: cysteine 36–cysteine 115, cysteine 69–cysteine 74, cysteine 121–cysteine 321, and cysteine 200–cysteine 232. The active-site Proton acceptor is the histidine 67. Residues aspartate 68, valine 71, glycine 73, aspartate 75, and serine 77 each coordinate Ca(2+). Residue proline 163 coordinates substrate. A heme b-binding site is contributed by histidine 193. Threonine 194 is a binding site for Ca(2+). Ca(2+) contacts are provided by aspartate 245, serine 248, and aspartate 253.

Belongs to the peroxidase family. Classical plant (class III) peroxidase subfamily. It depends on heme b as a cofactor. Ca(2+) serves as cofactor. As to expression, slightly expressed in roots.

Its subcellular location is the secreted. The catalysed reaction is 2 a phenolic donor + H2O2 = 2 a phenolic radical donor + 2 H2O. Functionally, removal of H(2)O(2), oxidation of toxic reductants, biosynthesis and degradation of lignin, suberization, auxin catabolism, response to environmental stresses such as wounding, pathogen attack and oxidative stress. These functions might be dependent on each isozyme/isoform in each plant tissue. The polypeptide is Peroxidase 45 (PER45) (Arabidopsis thaliana (Mouse-ear cress)).